The chain runs to 255 residues: Small ribosomal subunit protein uS2 (255 aa).

Positions 226–255 (QGVSNEEVAAEQNIDLDEKEKSEETEATEE) are disordered.

It belongs to the universal ribosomal protein uS2 family.

This Staphylococcus aureus (strain JH1) protein is Small ribosomal subunit protein uS2.